Reading from the N-terminus, the 454-residue chain is UPF0210 protein Mlab_1030 (454 aa).

Belongs to the UPF0210 family.

This chain is UPF0210 protein Mlab_1030, found in Methanocorpusculum labreanum (strain ATCC 43576 / DSM 4855 / Z).